A 450-amino-acid chain; its full sequence is 23S rRNA (uracil(1939)-C(5))-methyltransferase RlmD (450 aa).

In terms of domain architecture, TRAM spans 12 to 70 (SKQLSAKLSLSVNQLDHLGAGIAQHQGKVVFIPGALPDETVTVQLTEQKKNYARAKLIK). Residues Cys-83, Cys-89, Cys-92, and Cys-171 each coordinate [4Fe-4S] cluster. The S-adenosyl-L-methionine site is built by Gln-283, Phe-312, Asn-317, Glu-333, Asp-360, and Asp-380. Residue Cys-406 is the Nucleophile of the active site.

The protein belongs to the class I-like SAM-binding methyltransferase superfamily. RNA M5U methyltransferase family. RlmD subfamily.

It carries out the reaction uridine(1939) in 23S rRNA + S-adenosyl-L-methionine = 5-methyluridine(1939) in 23S rRNA + S-adenosyl-L-homocysteine + H(+). Functionally, catalyzes the formation of 5-methyl-uridine at position 1939 (m5U1939) in 23S rRNA. The chain is 23S rRNA (uracil(1939)-C(5))-methyltransferase RlmD from Shewanella baltica (strain OS223).